The sequence spans 239 residues: MIINAKGPASFAEKYIVRSIWENKFPPGSILPAERELSELIGVTRTTLREVLQRLARDGWLKIQHGKPTQVNNFWETSGLNILETIADLNPDGFPLLVDQLMAARGNVSNIYFRASIRHNPEKVVEVLAGIHSLENDAEAYATFDYQLHHTLAFASGNPLYVLILNGFKGLYNRVGRYYFSSQEARELTMRFYLKLEKLAQDKNYSDVPALMRTNGIESGKMWQKLRDDLPAEMGHDKS.

The region spanning 6–74 (KGPASFAEKY…HGKPTQVNNF (69 aa)) is the HTH gntR-type domain. Residues 34–53 (ERELSELIGVTRTTLREVLQ) constitute a DNA-binding region (H-T-H motif).

As to quaternary structure, homodimer.

The protein localises to the cytoplasm. Multifunctional regulator of fatty acid metabolism. The protein is Fatty acid metabolism regulator protein of Shewanella frigidimarina (strain NCIMB 400).